A 180-amino-acid chain; its full sequence is Large ribosomal subunit protein uL5 (180 aa).

It belongs to the universal ribosomal protein uL5 family. As to quaternary structure, part of the 50S ribosomal subunit; part of the 5S rRNA/L5/L18/L25 subcomplex. Contacts the 5S rRNA and the P site tRNA. Forms a bridge to the 30S subunit in the 70S ribosome.

In terms of biological role, this is one of the proteins that bind and probably mediate the attachment of the 5S RNA into the large ribosomal subunit, where it forms part of the central protuberance. In the 70S ribosome it contacts protein S13 of the 30S subunit (bridge B1b), connecting the 2 subunits; this bridge is implicated in subunit movement. Contacts the P site tRNA; the 5S rRNA and some of its associated proteins might help stabilize positioning of ribosome-bound tRNAs. The protein is Large ribosomal subunit protein uL5 of Limosilactobacillus fermentum (strain NBRC 3956 / LMG 18251) (Lactobacillus fermentum).